The following is a 256-amino-acid chain: BI1-like protein (256 aa).

The next 7 helical transmembrane spans lie at 53–73 (VYGI…VVVL), 85–105 (PGIL…LHIY), 113–133 (LILL…SCAM), 138–158 (IVLQ…AYTF), 167–187 (FSFL…TSFI), 189–209 (MFFP…ALVF), and 228–248 (EYIL…LTIL).

Belongs to the BI1 family.

Its subcellular location is the membrane. This chain is BI1-like protein, found in Arabidopsis thaliana (Mouse-ear cress).